Here is a 613-residue protein sequence, read N- to C-terminus: Xaa-Pro aminopeptidase ApepP (613 aa).

Substrate is bound by residues Arg77 and His388. Mn(2+) contacts are provided by Asp408, Asp419, and His482. 3 residues coordinate substrate: His482, His491, and Glu517. Residues Glu517 and Glu531 each contribute to the Mn(2+) site.

Belongs to the peptidase M24B family. It depends on Mn(2+) as a cofactor. In terms of tissue distribution, detected in gut, brain, testes and ovary.

It localises to the cytoplasm. It catalyses the reaction Release of any N-terminal amino acid, including proline, that is linked to proline, even from a dipeptide or tripeptide.. Inhibited by the chelating agent EDTA. Divalent metal ions have substrate- and concentration-dependent effects on activity. Activity towards bradykinin is inhibited with increasing Mn(2+) concentration. Activity towards substance P is stimulated by low Mn(2+) concentrations (in the range 10 uM-1 mM) but inhibited by Mn(2+) concentrations in excess of 1 mM. Ca(2+), Mg(2+) and Co(2+) stimulate activity towards substance P at concentrations of 10-100 uM but are inhibitory at concentrations of 1 mM. Zn(2+), Ni(2+) and Cu(2+) strongly inhibit activity towards substance P at concentrations of 1 mM. Its function is as follows. Catalyzes the removal of a penultimate prolyl residue from the N-termini of peptides, such as Arg-Pro-Pro. The protein is Xaa-Pro aminopeptidase ApepP of Drosophila melanogaster (Fruit fly).